Here is a 690-residue protein sequence, read N- to C-terminus: Peroxidase (690 aa).

The first 20 residues, 1–20, serve as a signal peptide directing secretion; the sequence is MIRARDLLLLALLGFISSAL. Cysteine 100 and cysteine 112 are oxidised to a cystine. The active-site Proton acceptor is the histidine 185. Residue asparagine 310 is glycosylated (N-linked (GlcNAc...) asparagine). An intrachain disulfide couples cysteine 315 to cysteine 324. Histidine 437 is a heme b binding site. 2 cysteine pairs are disulfide-bonded: cysteine 536–cysteine 592 and cysteine 636–cysteine 662.

It belongs to the peroxidase family. XPO subfamily. Heme b serves as cofactor.

It localises to the secreted. The enzyme catalyses 2 a phenolic donor + H2O2 = 2 a phenolic radical donor + 2 H2O. Its function is as follows. Involved in the chorion hardening process, through protein cross-linking mediated by the formation of di- and tri-tyrosine bonds. In Drosophila melanogaster (Fruit fly), this protein is Peroxidase (Pxd).